The chain runs to 105 residues: Large ribosomal subunit protein uL23 (105 aa).

It belongs to the universal ribosomal protein uL23 family. In terms of assembly, part of the 50S ribosomal subunit. Contacts protein L29, and trigger factor when it is bound to the ribosome.

Its function is as follows. One of the early assembly proteins it binds 23S rRNA. One of the proteins that surrounds the polypeptide exit tunnel on the outside of the ribosome. Forms the main docking site for trigger factor binding to the ribosome. The sequence is that of Large ribosomal subunit protein uL23 from Ureaplasma urealyticum serovar 10 (strain ATCC 33699 / Western).